The following is a 194-amino-acid chain: dTTP/UTP pyrophosphatase (194 aa).

Catalysis depends on D73, which acts as the Proton acceptor.

The protein belongs to the Maf family. YhdE subfamily. It depends on a divalent metal cation as a cofactor.

Its subcellular location is the cytoplasm. It catalyses the reaction dTTP + H2O = dTMP + diphosphate + H(+). It carries out the reaction UTP + H2O = UMP + diphosphate + H(+). Functionally, nucleoside triphosphate pyrophosphatase that hydrolyzes dTTP and UTP. May have a dual role in cell division arrest and in preventing the incorporation of modified nucleotides into cellular nucleic acids. The polypeptide is dTTP/UTP pyrophosphatase (Clostridium botulinum (strain Kyoto / Type A2)).